The sequence spans 109 residues: Small ribosomal subunit protein uS17 (109 aa).

This sequence belongs to the universal ribosomal protein uS17 family. As to quaternary structure, part of the 30S ribosomal subunit.

One of the primary rRNA binding proteins, it binds specifically to the 5'-end of 16S ribosomal RNA. This is Small ribosomal subunit protein uS17 from Methanosarcina mazei (strain ATCC BAA-159 / DSM 3647 / Goe1 / Go1 / JCM 11833 / OCM 88) (Methanosarcina frisia).